Reading from the N-terminus, the 132-residue chain is Global transcriptional regulator Spx (132 aa).

Cysteines 10 and 13 form a disulfide.

The protein belongs to the ArsC family. Spx subfamily. In terms of assembly, interacts with the C-terminal domain of the alpha subunit of the RNAP.

The protein resides in the cytoplasm. Global transcriptional regulator that plays a key role in stress response and exerts either positive or negative regulation of genes. Acts by interacting with the C-terminal domain of the alpha subunit of the RNA polymerase (RNAP). This interaction can enhance binding of RNAP to the promoter region of target genes and stimulate their transcription, or block interaction of RNAP with activator. This chain is Global transcriptional regulator Spx, found in Lactiplantibacillus plantarum (strain ATCC BAA-793 / NCIMB 8826 / WCFS1) (Lactobacillus plantarum).